The following is an 875-amino-acid chain: Cell surface glycoprotein (875 aa).

A signal peptide spans 1-23 (MTNTKQKINAVFLSALMVMSVFA). The segment covering 137–157 (EVQNGGSGDVTGSTLQTSSSG) has biased composition (polar residues). Disordered regions lie at residues 137-158 (EVQN…SSGP) and 197-217 (LPTA…DFDV). Low complexity predominate over residues 205-216 (DNGASGSNGDFD). A glycan (N-linked (GlcNAc...) asparagine) is linked at Asn253. The disordered stretch occupies residues 380-414 (YPASDSSNDGYASGGSHASSVTVRDTDGDGTDDSE). The span at 383–402 (SDSSNDGYASGGSHASSVTV) shows a compositional bias: polar residues. N-linked (GlcNAc...) asparagine glycosylation is found at Asn455, Asn563, Asn715, and Asn774. Residues 794-852 (EAGSLEEEQPDTETPEPDTETPEPDTETPEPDTETPEPDTETPEPDTETEEATTEASGP) form a disordered region. The span at 797–846 (SLEEEQPDTETPEPDTETPEPDTETPEPDTETPEPDTETPEPDTETEEAT) shows a compositional bias: acidic residues. A helical transmembrane segment spans residues 851-875 (GPGFTAAIALIALVAAALLAVRRDN). Residues 852-854 (PGF) carry the PGF sorting signal motif.

This sequence belongs to the halobacterial S-layer protein family. Post-translationally, asn-455 is glycosylated by a pentasaccharide comprising a hexose, 2 hexuronic acids, a methyl ester of a hexuronic acid and a final hexose. The complete pentasaccharide is first assembled on dolichol phosphate and then transferred the glycan to the target Asn. In terms of processing, cleaved by the archaeosortase ArtA at the C-terminus, with removal of a short hydrophobic segment. Lipidation.

It localises to the secreted. It is found in the cell wall. Its subcellular location is the S-layer. The protein resides in the cell membrane. In terms of biological role, S-layer protein. The S-layer is a paracrystalline mono-layered assembly of proteins which coat the surface of the cell. This chain is Cell surface glycoprotein (csg1), found in Haloarcula marismortui (strain ATCC 43049 / DSM 3752 / JCM 8966 / VKM B-1809) (Halobacterium marismortui).